Reading from the N-terminus, the 141-residue chain is uncharacterized protein (141 aa).

A run of 4 helical transmembrane segments spans residues 7-24, 39-56, 69-91, and 116-138; these read YRIP…FLSP, FLKF…HRGI, FYLI…ILGF, and FFIL…SSFI.

The protein resides in the cell membrane. This is an uncharacterized protein from Aquifex aeolicus (strain VF5).